The chain runs to 130 residues: Putative antitoxin VapB50 (130 aa).

Its function is as follows. Possibly the antitoxin component of a type II toxin-antitoxin (TA) system. Its cognate toxin is VapC50. This is Putative antitoxin VapB50 from Mycobacterium tuberculosis (strain ATCC 25618 / H37Rv).